The chain runs to 289 residues: Acetyl-coenzyme A carboxylase carboxyl transferase subunit beta (289 aa).

The CoA carboxyltransferase N-terminal domain maps to 34 to 289; that stretch reads MWVKCNKCGD…KLINMHQNSF (256 aa). The Zn(2+) site is built by Cys-38, Cys-41, Cys-57, and Cys-60. A C4-type zinc finger spans residues 38-60; the sequence is CNKCGDILYQNDLEKNYMVCNLC.

This sequence belongs to the AccD/PCCB family. Acetyl-CoA carboxylase is a heterohexamer composed of biotin carboxyl carrier protein (AccB), biotin carboxylase (AccC) and two subunits each of ACCase subunit alpha (AccA) and ACCase subunit beta (AccD). The cofactor is Zn(2+).

It localises to the cytoplasm. The enzyme catalyses N(6)-carboxybiotinyl-L-lysyl-[protein] + acetyl-CoA = N(6)-biotinyl-L-lysyl-[protein] + malonyl-CoA. The protein operates within lipid metabolism; malonyl-CoA biosynthesis; malonyl-CoA from acetyl-CoA: step 1/1. Component of the acetyl coenzyme A carboxylase (ACC) complex. Biotin carboxylase (BC) catalyzes the carboxylation of biotin on its carrier protein (BCCP) and then the CO(2) group is transferred by the transcarboxylase to acetyl-CoA to form malonyl-CoA. This chain is Acetyl-coenzyme A carboxylase carboxyl transferase subunit beta, found in Clostridium botulinum (strain Langeland / NCTC 10281 / Type F).